Reading from the N-terminus, the 148-residue chain is Aspartate carbamoyltransferase regulatory chain (148 aa).

Zn(2+) is bound by residues C106, C111, C134, and C137.

It belongs to the PyrI family. As to quaternary structure, contains catalytic and regulatory chains. The cofactor is Zn(2+).

In terms of biological role, involved in allosteric regulation of aspartate carbamoyltransferase. This Methanococcus maripaludis (strain DSM 14266 / JCM 13030 / NBRC 101832 / S2 / LL) protein is Aspartate carbamoyltransferase regulatory chain.